We begin with the raw amino-acid sequence, 850 residues long: Penicillin-binding protein 1A (850 aa).

Topologically, residues 1-5 (MKFVK) are cytoplasmic. A helical; Signal-anchor for type II membrane protein membrane pass occupies residues 6–26 (YFLILAVCCILLGAGSIYGLY). The Periplasmic portion of the chain corresponds to 27-850 (RYIEPQLPDV…IDNGEAQELF (824 aa)). The transglycosylase stretch occupies residues 48–216 (MQIYSADGEL…STFNPLYSMD (169 aa)). Glu86 acts as the Proton donor; for transglycosylase activity in catalysis. The interval 400–710 (DVLQTGQQIW…GWRAGRDLQR (311 aa)) is transpeptidase. Ser465 acts as the Acyl-ester intermediate; for transpeptidase activity in catalysis.

It in the N-terminal section; belongs to the glycosyltransferase 51 family. This sequence in the C-terminal section; belongs to the transpeptidase family.

The protein localises to the cell inner membrane. The enzyme catalyses [GlcNAc-(1-&gt;4)-Mur2Ac(oyl-L-Ala-gamma-D-Glu-L-Lys-D-Ala-D-Ala)](n)-di-trans,octa-cis-undecaprenyl diphosphate + beta-D-GlcNAc-(1-&gt;4)-Mur2Ac(oyl-L-Ala-gamma-D-Glu-L-Lys-D-Ala-D-Ala)-di-trans,octa-cis-undecaprenyl diphosphate = [GlcNAc-(1-&gt;4)-Mur2Ac(oyl-L-Ala-gamma-D-Glu-L-Lys-D-Ala-D-Ala)](n+1)-di-trans,octa-cis-undecaprenyl diphosphate + di-trans,octa-cis-undecaprenyl diphosphate + H(+). It catalyses the reaction Preferential cleavage: (Ac)2-L-Lys-D-Ala-|-D-Ala. Also transpeptidation of peptidyl-alanyl moieties that are N-acyl substituents of D-alanine.. The protein operates within cell wall biogenesis; peptidoglycan biosynthesis. Functionally, cell wall formation. Synthesis of cross-linked peptidoglycan from the lipid intermediates. The enzyme has a penicillin-insensitive transglycosylase N-terminal domain (formation of linear glycan strands) and a penicillin-sensitive transpeptidase C-terminal domain (cross-linking of the peptide subunits). In Escherichia coli (strain K12), this protein is Penicillin-binding protein 1A (mrcA).